A 237-amino-acid chain; its full sequence is Phosphoribosylaminoimidazole-succinocarboxamide synthase (237 aa).

It belongs to the SAICAR synthetase family.

The enzyme catalyses 5-amino-1-(5-phospho-D-ribosyl)imidazole-4-carboxylate + L-aspartate + ATP = (2S)-2-[5-amino-1-(5-phospho-beta-D-ribosyl)imidazole-4-carboxamido]succinate + ADP + phosphate + 2 H(+). The protein operates within purine metabolism; IMP biosynthesis via de novo pathway; 5-amino-1-(5-phospho-D-ribosyl)imidazole-4-carboxamide from 5-amino-1-(5-phospho-D-ribosyl)imidazole-4-carboxylate: step 1/2. The chain is Phosphoribosylaminoimidazole-succinocarboxamide synthase from Enterococcus faecalis (strain ATCC 700802 / V583).